We begin with the raw amino-acid sequence, 155 residues long: Ribonuclease HI (155 aa).

The RNase H type-1 domain maps to 1–142 (MTKQVEIFTD…CDELARAAAE (142 aa)). Positions 10, 48, 70, and 134 each coordinate Mg(2+).

It belongs to the RNase H family. As to quaternary structure, monomer. It depends on Mg(2+) as a cofactor.

It localises to the cytoplasm. It carries out the reaction Endonucleolytic cleavage to 5'-phosphomonoester.. Functionally, endonuclease that specifically degrades the RNA of RNA-DNA hybrids. The protein is Ribonuclease HI of Vibrio vulnificus (strain CMCP6).